The sequence spans 154 residues: Large ribosomal subunit protein uL16 (154 aa).

Belongs to the universal ribosomal protein uL16 family. In terms of assembly, part of the 50S ribosomal subunit.

Its function is as follows. Binds 23S rRNA and is also seen to make contacts with the A and possibly P site tRNAs. The chain is Large ribosomal subunit protein uL16 from Synechococcus sp. (strain RCC307).